The following is a 1096-amino-acid chain: DNA-directed RNA polymerase subunit beta (1096 aa).

The interval 1070–1096 (LMQDVNPRRSTPSRPTYESLGSDYQED) is disordered.

This sequence belongs to the RNA polymerase beta chain family. In terms of assembly, in cyanobacteria the RNAP catalytic core is composed of 2 alpha, 1 beta, 1 beta', 1 gamma and 1 omega subunit. When a sigma factor is associated with the core the holoenzyme is formed, which can initiate transcription.

It catalyses the reaction RNA(n) + a ribonucleoside 5'-triphosphate = RNA(n+1) + diphosphate. DNA-dependent RNA polymerase catalyzes the transcription of DNA into RNA using the four ribonucleoside triphosphates as substrates. This is DNA-directed RNA polymerase subunit beta from Prochlorococcus marinus (strain MIT 9211).